The following is a 69-amino-acid chain: Magnetosome protein MamI (69 aa).

The Cytoplasmic portion of the chain corresponds to 1-2 (MP). A helical transmembrane segment spans residues 3–23 (SVIFGLLALAIGLLGLTAWWW). The Lumenal segment spans residues 24-31 (SVTEFLRG). A helical membrane pass occupies residues 32–52 (AVPVALIIFGLVALAAGVQSV). The Cytoplasmic portion of the chain corresponds to 53–69 (RVPPAGKRANSDPNIDG).

It belongs to the magnetosome MamI protein family.

It is found in the magnetosome membrane. May be involved in an early stage of magnetosome nucleation. Not essential for formation of magnetosome membrane vesicles, it is probably functionally redundant with other proteins. May bind magnetite. One of 7 genes (mamLQBIEMO) able to induce magnetosome membrane biogenesis; coexpression of mamLQRBIEMO in a deletion of the 17 gene mamAB operon restores magnetosome vesicle formation but not magnetite biosynthesis. This chain is Magnetosome protein MamI, found in Magnetospirillum gryphiswaldense (strain DSM 6361 / JCM 21280 / NBRC 15271 / MSR-1).